The following is a 135-amino-acid chain: ARGOS-like protein (135 aa).

Residues 71–122 (FSLESMVVLVGLTASLLILPLILPPLPPPPFMLLLIPIGIMVLLMVLAFMPS) are organ Size Related (OSR) domain. 2 helical membrane-spanning segments follow: residues 76–96 (MVVLVGLTASLLILPLILPPL) and 100–120 (PFMLLLIPIGIMVLLMVLAFM).

It belongs to the plant organ size related (OSR) protein family. As to expression, expressed in cotyledons, roots, flowers, siliques and leaves.

Its subcellular location is the membrane. The protein resides in the nucleus. The protein localises to the cytoplasm. It localises to the endoplasmic reticulum. Functionally, promotes cell expansion-dependent organ growth, probably via a brassinosteroids signaling pathway. Acts downstream of BRI1. The protein is ARGOS-like protein (ARL) of Arabidopsis thaliana (Mouse-ear cress).